A 410-amino-acid polypeptide reads, in one-letter code: Peptidase T (410 aa).

Residue His79 coordinates Zn(2+). Asp81 is an active-site residue. Asp142 is a Zn(2+) binding site. Glu176 acts as the Proton acceptor in catalysis. Residues Glu177, Asp199, and His381 each contribute to the Zn(2+) site.

It belongs to the peptidase M20B family. It depends on Zn(2+) as a cofactor.

It is found in the cytoplasm. It carries out the reaction Release of the N-terminal residue from a tripeptide.. Functionally, cleaves the N-terminal amino acid of tripeptides. The protein is Peptidase T of Bacillus cereus (strain G9842).